Consider the following 518-residue polypeptide: Cytochrome P450 3A27 (518 aa).

Cysteine 447 contacts heme.

The protein belongs to the cytochrome P450 family. It depends on heme as a cofactor.

It is found in the endoplasmic reticulum membrane. It localises to the microsome membrane. It carries out the reaction an organic molecule + reduced [NADPH--hemoprotein reductase] + O2 = an alcohol + oxidized [NADPH--hemoprotein reductase] + H2O + H(+). In terms of biological role, cytochromes P450 are a group of heme-thiolate monooxygenases. In liver microsomes, this enzyme is involved in an NADPH-dependent electron transport pathway. It oxidizes a variety of structurally unrelated compounds, including steroids, fatty acids, and xenobiotics. The sequence is that of Cytochrome P450 3A27 (cyp3a27) from Oncorhynchus mykiss (Rainbow trout).